The following is a 687-amino-acid chain: Glycine--tRNA ligase beta subunit (687 aa).

The protein belongs to the class-II aminoacyl-tRNA synthetase family. Tetramer of two alpha and two beta subunits.

Its subcellular location is the cytoplasm. It carries out the reaction tRNA(Gly) + glycine + ATP = glycyl-tRNA(Gly) + AMP + diphosphate. This Ruegeria sp. (strain TM1040) (Silicibacter sp.) protein is Glycine--tRNA ligase beta subunit.